The sequence spans 365 residues: Decapping nuclease RAI1 (365 aa).

Glu165 is an a divalent metal cation binding site. 2 residues coordinate substrate: Cys197 and Glu214. Asp216, Glu234, and Leu235 together coordinate a divalent metal cation. Lys236 and Gln260 together coordinate substrate.

It belongs to the DXO/Dom3Z family. In terms of assembly, interacts with rat1; the interaction is direct, stabilizes rat1 protein structure and stimulates its exoribonuclease activity. The interaction also stimulates rai1 pyrophosphohydrolase activity, probably by recruiting it to mRNA substrates. A divalent metal cation is required as a cofactor.

Its subcellular location is the nucleus. It catalyses the reaction a 5'-end NAD(+)-phospho-ribonucleoside in mRNA + H2O = a 5'-end phospho-ribonucleoside in mRNA + NAD(+) + H(+). The catalysed reaction is a 5'-end (N(7)-methyl 5'-triphosphoguanosine)-ribonucleoside-ribonucleotide in mRNA + H2O = a (N(7)-methyl 5'-triphosphoguanosine)-nucleoside + a 5'-end phospho-ribonucleoside in mRNA + H(+). It carries out the reaction a 5'-end triphospho-ribonucleoside in mRNA + H2O = a 5'-end phospho-ribonucleoside in mRNA + diphosphate + H(+). Decapping enzyme for NAD-capped RNAs: specifically hydrolyzes the nicotinamide adenine dinucleotide (NAD) cap from a subset of RNAs by removing the entire NAD moiety from the 5'-end of an NAD-capped RNA. The NAD-cap is present at the 5'-end of some RNAs and snoRNAs. In contrast to the canonical 5'-end N7 methylguanosine (m7G) cap, the NAD cap promotes mRNA decay. Also acts as a non-canonical decapping enzyme that removes the entire cap structure of m7G capped or incompletely capped RNAs. Has decapping activity toward incomplete 5'-end m7G cap mRNAs such as unmethylated 5'-end-capped RNA (cap0), while it has no activity toward 2'-O-ribose methylated m7G cap (cap1). Also possesses RNA 5'-pyrophosphohydrolase activity by hydrolyzing the 5'-end triphosphate to release pyrophosphates. Stimulates exoribonuclease activity of Rat1, allowing it to degrade RNAs with stable secondary structure more effectively. This is Decapping nuclease RAI1 (rai1) from Aspergillus fumigatus (strain ATCC MYA-4609 / CBS 101355 / FGSC A1100 / Af293) (Neosartorya fumigata).